The chain runs to 256 residues: GDSL esterase/lipase CPRD49 (256 aa).

The N-terminal stretch at 1–27 (MVGPARPQIVLFGSSIVQMSFGHGGWG) is a signal peptide. Catalysis depends on Ser-15, which acts as the Nucleophile. 2 N-linked (GlcNAc...) asparagine glycosylation sites follow: Asn-49 and Asn-79. The active site involves His-213. N-linked (GlcNAc...) asparagine glycosylation occurs at Asn-243.

This sequence belongs to the 'GDSL' lipolytic enzyme family. In terms of tissue distribution, specifically expressed in anthers (stages 8-12).

The protein resides in the secreted. This Arabidopsis thaliana (Mouse-ear cress) protein is GDSL esterase/lipase CPRD49 (CPRD49).